The following is a 218-amino-acid chain: Protease PrsW (218 aa).

Residues 1–23 (MFAIISAGIAPGIALLSYFYLKD) form a helical membrane-spanning segment. The Cytoplasmic segment spans residues 24-30 (QYDNEPV). Residues 31–53 (HMVLRSFFLGVVLVFPIMFIQYV) traverse the membrane as a helical segment. Topologically, residues 54–98 (LEKENVGGGSFFVSFLSSGFLEESLKWFILMISVYPHAHFDEHYD) are extracellular. The chain crosses the membrane as a helical span at residues 99 to 121 (GIVYGASVSLGFATLENILYLIG). The Cytoplasmic segment spans residues 122–129 (HGVEHAFV). Residues 130–151 (RALLPVSCHALIGVIMGFYLGK) traverse the membrane as a helical segment. The Extracellular segment spans residues 152–180 (ARFSADKARVKWLTLSLVVPSLLHGSYDF). Residues 181–203 (ILTALSNWIYYMLPFMVFLWWFG) form a helical membrane-spanning segment. The Cytoplasmic segment spans residues 204–218 (LRKAKKARSVNMMQV).

This sequence belongs to the protease PrsW family.

The protein localises to the cell membrane. Functionally, involved in the degradation of anti-sigma-W factor RsiW. Responsible for Site-1 cleavage of the RsiW anti-sigma factor. This results, after two other proteolytic steps catalyzed by the RasP and ClpXP proteases, in the release of SigW and the transcription activation of the genes under the control of the sigma-W factor. Seems to be responsible for sensing antimicrobial peptides that damage the cell membrane and other agents that cause cell envelope stress. Therefore it is a protease governing regulated intramembrane proteolysis and resistance to antimicrobial peptides in B.subtilis. This is Protease PrsW from Bacillus subtilis (strain 168).